The following is a 324-amino-acid chain: MGKRAVVTGVGHYLPSRVVPNSELETLVDTTDEWIRTRSGIERRHFAADGEQTSDLATAAAQAALDHAELTAQDVDAVIVATSTPDLTFPAVATMVQARLGMTRGFAYDVQAVCAGFVFAMANANAMILSGQADRILVIGAETFSRIMDWTDRSTCVLFGDGAGAVVLEARDGTGGTADRGILSADLNSDGRHRDILYVDGGVSSSQTAGYLRMEGKEVFRHAIEKLAATAETALAKAGLTEADVDWVVPHQANLRIITATARKMGIGMDRVVVTVADHGNTSAASIPMALSVGVARGQIKPGDLVVTEAIGGGLSWGSVVLRW.

Residues C114 and H251 contribute to the active site. The tract at residues 252 to 256 (QANLR) is ACP-binding. Residue N281 is part of the active site.

The protein belongs to the thiolase-like superfamily. FabH family. As to quaternary structure, homodimer.

It localises to the cytoplasm. It carries out the reaction malonyl-[ACP] + acetyl-CoA + H(+) = 3-oxobutanoyl-[ACP] + CO2 + CoA. It functions in the pathway lipid metabolism; fatty acid biosynthesis. Catalyzes the condensation reaction of fatty acid synthesis by the addition to an acyl acceptor of two carbons from malonyl-ACP. Catalyzes the first condensation reaction which initiates fatty acid synthesis and may therefore play a role in governing the total rate of fatty acid production. Possesses both acetoacetyl-ACP synthase and acetyl transacylase activities. Its substrate specificity determines the biosynthesis of branched-chain and/or straight-chain of fatty acids. The polypeptide is Beta-ketoacyl-[acyl-carrier-protein] synthase III (Dinoroseobacter shibae (strain DSM 16493 / NCIMB 14021 / DFL 12)).